The primary structure comprises 568 residues: Probable asparagine--tRNA ligase, cytoplasmic (568 aa).

Belongs to the class-II aminoacyl-tRNA synthetase family.

The protein localises to the cytoplasm. It catalyses the reaction tRNA(Asn) + L-asparagine + ATP = L-asparaginyl-tRNA(Asn) + AMP + diphosphate + H(+). Its function is as follows. Cytosolic asparaginyl-tRNA synthetase which catalyzes the specific attachment of asparagine to its cognate tRNA. The polypeptide is Probable asparagine--tRNA ligase, cytoplasmic (nrs1) (Schizosaccharomyces pombe (strain 972 / ATCC 24843) (Fission yeast)).